The chain runs to 250 residues: uncharacterized protein (250 aa).

This is an uncharacterized protein from Rickettsia prowazekii (strain Madrid E).